We begin with the raw amino-acid sequence, 283 residues long: Myeloid differentiation primary response protein MyD88-B (283 aa).

The Death domain maps to 27-105; the sequence is RLCLYLNPNA…DILTDLAPLI (79 aa). The tract at residues 106 to 143 is intermediate domain; sequence EADCKKYLEKKHGPLPLQDDNVDSSEQYRITKSDDPYG. Residues 147-281 form the TIR domain; that stretch reads ETFDAFICCC…WFWDKLAKAL (135 aa).

The protein resides in the cytoplasm. In terms of biological role, adapter protein involved in the Toll-like receptor and IL-1 receptor signaling pathway in the innate immune response. Activates expression of target genes in the Spemann organizer region during early embryonic development. Is required for normal axis formation. This is Myeloid differentiation primary response protein MyD88-B (myd88-b) from Xenopus laevis (African clawed frog).